The chain runs to 151 residues: Large ribosomal subunit protein uL13 (151 aa).

It belongs to the universal ribosomal protein uL13 family. In terms of assembly, part of the 50S ribosomal subunit.

In terms of biological role, this protein is one of the early assembly proteins of the 50S ribosomal subunit, although it is not seen to bind rRNA by itself. It is important during the early stages of 50S assembly. The chain is Large ribosomal subunit protein uL13 from Rippkaea orientalis (strain PCC 8801 / RF-1) (Cyanothece sp. (strain PCC 8801)).